Here is a 183-residue protein sequence, read N- to C-terminus: ATP synthase subunit delta (183 aa).

The protein belongs to the ATPase delta chain family. As to quaternary structure, F-type ATPases have 2 components, F(1) - the catalytic core - and F(0) - the membrane proton channel. F(1) has five subunits: alpha(3), beta(3), gamma(1), delta(1), epsilon(1). CF(0) has four main subunits: a(1), b(1), b'(1) and c(10-14). The alpha and beta chains form an alternating ring which encloses part of the gamma chain. F(1) is attached to F(0) by a central stalk formed by the gamma and epsilon chains, while a peripheral stalk is formed by the delta, b and b' chains.

It localises to the cellular thylakoid membrane. F(1)F(0) ATP synthase produces ATP from ADP in the presence of a proton or sodium gradient. F-type ATPases consist of two structural domains, F(1) containing the extramembraneous catalytic core and F(0) containing the membrane proton channel, linked together by a central stalk and a peripheral stalk. During catalysis, ATP synthesis in the catalytic domain of F(1) is coupled via a rotary mechanism of the central stalk subunits to proton translocation. Functionally, this protein is part of the stalk that links CF(0) to CF(1). It either transmits conformational changes from CF(0) to CF(1) or is implicated in proton conduction. This chain is ATP synthase subunit delta, found in Prochlorococcus marinus (strain SARG / CCMP1375 / SS120).